The sequence spans 176 residues: NAD(P)H-quinone oxidoreductase subunit 6, chloroplastic (176 aa).

5 consecutive transmembrane segments (helical) span residues 10-30 (FLLV…VLLP), 32-52 (PIFS…LYIL), 61-81 (AQLL…VMFM), 92-112 (LWTV…FSLM), and 152-172 (FFLP…GAIS).

This sequence belongs to the complex I subunit 6 family. In terms of assembly, NDH is composed of at least 16 different subunits, 5 of which are encoded in the nucleus.

Its subcellular location is the plastid. The protein resides in the chloroplast thylakoid membrane. It catalyses the reaction a plastoquinone + NADH + (n+1) H(+)(in) = a plastoquinol + NAD(+) + n H(+)(out). It carries out the reaction a plastoquinone + NADPH + (n+1) H(+)(in) = a plastoquinol + NADP(+) + n H(+)(out). Functionally, NDH shuttles electrons from NAD(P)H:plastoquinone, via FMN and iron-sulfur (Fe-S) centers, to quinones in the photosynthetic chain and possibly in a chloroplast respiratory chain. The immediate electron acceptor for the enzyme in this species is believed to be plastoquinone. Couples the redox reaction to proton translocation, and thus conserves the redox energy in a proton gradient. The sequence is that of NAD(P)H-quinone oxidoreductase subunit 6, chloroplastic (ndhG) from Nasturtium officinale (Watercress).